Consider the following 450-residue polypeptide: Glutamate--tRNA ligase 1 (450 aa).

The 'HIGH' region signature appears at 7–17 (PSPTGYMHVGN). The short motif at 236–240 (KISKR) is the 'KMSKS' region element. Lysine 239 contacts ATP.

The protein belongs to the class-I aminoacyl-tRNA synthetase family. Glutamate--tRNA ligase type 1 subfamily. As to quaternary structure, monomer.

Its subcellular location is the cytoplasm. It carries out the reaction tRNA(Glu) + L-glutamate + ATP = L-glutamyl-tRNA(Glu) + AMP + diphosphate. Catalyzes the attachment of glutamate to tRNA(Glu) in a two-step reaction: glutamate is first activated by ATP to form Glu-AMP and then transferred to the acceptor end of tRNA(Glu). This is Glutamate--tRNA ligase 1 from Anaplasma phagocytophilum (strain HZ).